A 479-amino-acid polypeptide reads, in one-letter code: 6-phosphogluconate dehydrogenase, decarboxylating (479 aa).

NADP(+)-binding positions include 9 to 14, 32 to 34, 74 to 76, and Asn-102; these read GLAVMG, NRT, and IQA. Residues Asn-102 and 128–130 each bind substrate; that span reads SGG. The active-site Proton acceptor is the Lys-182. A substrate-binding site is contributed by 185-186; that stretch reads HN. Glu-189 acts as the Proton donor in catalysis. Substrate contacts are provided by Tyr-190, Lys-259, Arg-286, Arg-446, and His-452.

Belongs to the 6-phosphogluconate dehydrogenase family. As to quaternary structure, homodimer.

The catalysed reaction is 6-phospho-D-gluconate + NADP(+) = D-ribulose 5-phosphate + CO2 + NADPH. It participates in carbohydrate degradation; pentose phosphate pathway; D-ribulose 5-phosphate from D-glucose 6-phosphate (oxidative stage): step 3/3. Functionally, catalyzes the oxidative decarboxylation of 6-phosphogluconate to ribulose 5-phosphate and CO(2), with concomitant reduction of NADP to NADPH. This Chlamydia pneumoniae (Chlamydophila pneumoniae) protein is 6-phosphogluconate dehydrogenase, decarboxylating (gnd).